A 44-amino-acid chain; its full sequence is Small, acid-soluble spore protein N (44 aa).

Residues 1–44 (MGNPKKNSKDFAPNHIGTQSKKAGGNKGKQMQDQTGKQPIVDNG) are disordered.

The protein belongs to the SspN family.

The protein resides in the spore core. The protein is Small, acid-soluble spore protein N of Bacillus anthracis (strain A0248).